Here is a 163-residue protein sequence, read N- to C-terminus: Gas vesicle protein H2 (163 aa).

Positions 57–92 (LGSDARSPSTPAGNADDAGDAETAHIETRASDDSDD) are disordered. A compositionally biased stretch (basic and acidic residues) spans 78–88 (ETAHIETRASD).

This sequence belongs to the gas vesicle GvpH family. In terms of assembly, gvpF to GvpM interact with each other in vitro, and may form multi-subunit complex(es). Interacts with GvpC. Might interact with GvpA.

It localises to the gas vesicle. It is found in the cytoplasm. Functionally, a minor component of the gas vesicle, also found in soluble extracts. Proteins GvpF to GvpM might be involved in nucleating gas vesicle formation. Gas vesicles are hollow, gas filled proteinaceous nanostructures found in several microbial planktonic microorganisms. They allow positioning of halobacteria at the optimal depth for growth in the poorly aerated, shallow brine pools of their habitat. Expression of 2 c-vac DNA fragments containing 2 divergently transcribed regions (gvpE-gvpF-gvpG-gvpH-gvpI-gvpJ-gvpK-gvpL-gvpM and gvpA-gvpC-gvpN-gvpO) allows H.volcanii to produce gas vesicles. The sequence is that of Gas vesicle protein H2 from Halobacterium salinarum (strain ATCC 700922 / JCM 11081 / NRC-1) (Halobacterium halobium).